An 865-amino-acid polypeptide reads, in one-letter code: Probable beta-glucosidase J (865 aa).

Asp-233 is an active-site residue. Residues Asn-330, Asn-447, Asn-503, and Asn-764 are each glycosylated (N-linked (GlcNAc...) asparagine). Residues Thr-411–Val-579 form the PA14 domain.

It belongs to the glycosyl hydrolase 3 family.

It localises to the secreted. It carries out the reaction Hydrolysis of terminal, non-reducing beta-D-glucosyl residues with release of beta-D-glucose.. Its pathway is glycan metabolism; cellulose degradation. In terms of biological role, beta-glucosidases are one of a number of cellulolytic enzymes involved in the degradation of cellulosic biomass. Catalyzes the last step releasing glucose from the inhibitory cellobiose. The sequence is that of Probable beta-glucosidase J (bglJ) from Aspergillus fumigatus (strain ATCC MYA-4609 / CBS 101355 / FGSC A1100 / Af293) (Neosartorya fumigata).